We begin with the raw amino-acid sequence, 214 residues long: Large ribosomal subunit protein uL3 (214 aa).

The interval Thr-134–Lys-161 is disordered. Gln-151 is subject to N5-methylglutamine.

The protein belongs to the universal ribosomal protein uL3 family. As to quaternary structure, part of the 50S ribosomal subunit. Forms a cluster with proteins L14 and L19. In terms of processing, methylated by PrmB.

One of the primary rRNA binding proteins, it binds directly near the 3'-end of the 23S rRNA, where it nucleates assembly of the 50S subunit. The chain is Large ribosomal subunit protein uL3 from Teredinibacter turnerae (strain ATCC 39867 / T7901).